A 104-amino-acid polypeptide reads, in one-letter code: Large ribosomal subunit protein uL24 (104 aa).

The protein belongs to the universal ribosomal protein uL24 family. Part of the 50S ribosomal subunit.

One of two assembly initiator proteins, it binds directly to the 5'-end of the 23S rRNA, where it nucleates assembly of the 50S subunit. Its function is as follows. One of the proteins that surrounds the polypeptide exit tunnel on the outside of the subunit. This chain is Large ribosomal subunit protein uL24, found in Rhodopseudomonas palustris (strain BisB18).